Reading from the N-terminus, the 733-residue chain is Centrosomal protein of 68 kDa (733 aa).

Residues 71–80 (SKEPVADRSK) are compositionally biased toward basic and acidic residues. Disordered stretches follow at residues 71–92 (SKEP…SASV), 150–207 (GLSQ…SFAN), and 222–244 (VVGA…DATG). The span at 178–190 (SSRSISASSVGSS) shows a compositional bias: low complexity. Positions 231 to 241 (GSAQPLTSGSD) are enriched in polar residues. S315 carries the phosphoserine modification. The segment at 420–442 (PQLKTKEKEPPFPRQKRGRQHVS) is disordered. S453 and S459 each carry phosphoserine. Residues 497–571 (HSSLQVSDSD…KPLKTQPASK (75 aa)) are disordered. Over residues 540 to 569 (IQPQDSRGKSSLMSNQTLGVSSKPLKTQPA) the composition is skewed to polar residues.

In terms of assembly, interacts with CNTLN; the interaction recruits CEP68 to the centrosome. Interacts with the SCF(FBXW11) complex which contains SKP1, CUL1 and FBXW11; the interaction is probably mediated by FBXW11 and the complex also contains CDK5RAP2 and PCNT. Also interacts with F-box protein BTRC. Interacts with serine/threonine-protein kinase PLK1; the interaction leads to phosphorylation of CEP68 and its subsequent degradation. Interacts with NEK2; the interaction leads to phosphorylation of CEP68. Post-translationally, phosphorylation by PLK1 is required for binding to BTRC in prometaphase. Phosphorylated directly or indirectly by NEK2. NEK2-mediated phosphorylation promotes CEP68 dissociation from the centrosome and its degradation at the onset of mitosis. In terms of processing, ubiquitinated and targeted for proteasomal degradation in early mitosis by the SCF(BTRC) and/or SCF(FBXW11) E3 ubiquitin-protein ligase complexes. Degradation is complete by prometaphase and is required for removal of CDK5RAP2 from the peripheral pericentriolar material and subsequent centriole separation.

It localises to the cytoplasm. The protein resides in the cytoskeleton. Its subcellular location is the microtubule organizing center. It is found in the centrosome. Involved in maintenance of centrosome cohesion, probably as part of a linker structure which prevents centrosome splitting. Required for localization of CDK5RAP2 to the centrosome during interphase. Contributes to CROCC/rootletin filament formation. The chain is Centrosomal protein of 68 kDa (Cep68) from Mus musculus (Mouse).